The sequence spans 90 residues: UPF0297 protein lmo1503 (90 aa).

The protein belongs to the UPF0297 family.

In Listeria monocytogenes serovar 1/2a (strain ATCC BAA-679 / EGD-e), this protein is UPF0297 protein lmo1503.